A 257-amino-acid chain; its full sequence is 5'-nucleotidase SurE (257 aa).

Asp-8, Asp-9, Ser-39, and Asn-87 together coordinate a divalent metal cation. The segment at 234–257 is disordered; it reads VSPLTAPHPTTGHEGLAGLAEKYQ.

It belongs to the SurE nucleotidase family. The cofactor is a divalent metal cation.

The protein resides in the cytoplasm. It carries out the reaction a ribonucleoside 5'-phosphate + H2O = a ribonucleoside + phosphate. Its function is as follows. Nucleotidase that shows phosphatase activity on nucleoside 5'-monophosphates. This is 5'-nucleotidase SurE from Natronomonas pharaonis (strain ATCC 35678 / DSM 2160 / CIP 103997 / JCM 8858 / NBRC 14720 / NCIMB 2260 / Gabara) (Halobacterium pharaonis).